The following is a 170-amino-acid chain: Group 2 truncated hemoglobin 3-1 (170 aa).

Residue H98 participates in heme b binding.

This sequence belongs to the truncated hemoglobin family. Group II subfamily. Homodimer when ferric.

In terms of biological role, hemoglobin-like protein that exhibits an unusual concentration-independent binding of O(2) and CO. Required for general plant development and during nodulation. May promote shoot organogenesis from root explants. This chain is Group 2 truncated hemoglobin 3-1, found in Medicago truncatula (Barrel medic).